A 663-amino-acid polypeptide reads, in one-letter code: Heparan-alpha-glucosaminide N-acetyltransferase (663 aa).

A disordered region spans residues 1 to 24; that stretch reads MTGARASAAEQRRAGRSGQARAAE. Topologically, residues 1–190 are lumenal, vesicle; that stretch reads MTGARASAAE…LAVNEDPVDS (190 aa). N94, N142, and N162 each carry an N-linked (GlcNAc...) asparagine glycan. C151 and C462 are disulfide-bonded. The helical transmembrane segment at 191–211 threads the bilayer; sequence NLPVSIAFLIGLAVIIVISFL. Residues 212–275 lie on the Cytoplasmic side of the membrane; sequence RLLLSLDDFN…PRLRSVDTFR (64 aa). 2 positions are modified to phosphoserine: S243 and S245. A helical membrane pass occupies residues 276 to 296; the sequence is GIALILMVFVNYGGGKYWYFK. H297 is an active-site residue. Residues 297-302 lie on the Lumenal, vesicle side of the membrane; that stretch reads HASWNG. The chain crosses the membrane as a helical span at residues 303–323; it reads LTVADLVFPWFVFIMGSSIFL. The Cytoplasmic portion of the chain corresponds to 324-345; the sequence is SMTSILQRGCSKFRLLGKIAWR. A helical membrane pass occupies residues 346–366; it reads SFLLICIGIIIVNPNYCLGPL. Topologically, residues 367-374 are lumenal, vesicle; sequence SWDKVRIP. The chain crosses the membrane as a helical span at residues 375-395; sequence GVLQRLGVTYFVVAVLELLFA. Residues 396 to 420 lie on the Cytoplasmic side of the membrane; the sequence is KPVPEHCASERSCLSLRDITSSWPQ. A helical membrane pass occupies residues 421-441; it reads WLLILVLEGLWLGLTFLLPVP. Residues 442 to 500 lie on the Lumenal, vesicle side of the membrane; it reads GCPTGYLGPGGIGDFGKYPNCTGGAAGYIDRLLLGDDHLYQHPSSAVLYHTEVAYDPEG. The chain crosses the membrane as a helical span at residues 501 to 521; sequence ILGTINSIVMAFLGVQAGKIL. Topologically, residues 522–529 are cytoplasmic; sequence LYYKARTK. A helical transmembrane segment spans residues 530–550; it reads DILIRFTAWCCILGLISVALT. Residues 551–564 lie on the Lumenal, vesicle side of the membrane; it reads KVSENEGFIPVNKN. The chain crosses the membrane as a helical span at residues 565–585; it reads LWSLSYVTTLSSFAFFILLVL. Residues 586–592 lie on the Cytoplasmic side of the membrane; the sequence is YPVVDVK. A helical transmembrane segment spans residues 593-613; it reads GLWTGTPFFYPGMNSILVYVG. Topologically, residues 614 to 634 are lumenal, vesicle; sequence HEVFENYFPFQWKLKDNQSHK. The interval 624-635 is lysosomal targeting region; the sequence is QWKLKDNQSHKE. The helical transmembrane segment at 635–655 threads the bilayer; it reads EHLTQNIVATALWVLIAYILY. The Cytoplasmic portion of the chain corresponds to 656 to 663; sequence RKKIFWKI.

As to quaternary structure, homooligomer. Homooligomerization is necessary for enzyme activity. Undergoes intralysosomal proteolytic cleavage; occurs within the end of the first and/or the beginning of the second luminal domain and is essential for the activation of the enzyme. In terms of processing, glycosylated. Widely expressed, with highest level in leukocytes, heart, liver, skeletal muscle, lung, placenta and liver.

The protein localises to the lysosome membrane. The catalysed reaction is alpha-D-glucosaminyl-[heparan sulfate](n) + acetyl-CoA = N-acetyl-alpha-D-glucosaminyl-[heparan sulfate](n) + CoA + H(+). Its function is as follows. Lysosomal acetyltransferase that acetylates the non-reducing terminal alpha-glucosamine residue of intralysosomal heparin or heparan sulfate, converting it into a substrate for luminal alpha-N-acetyl glucosaminidase. This is Heparan-alpha-glucosaminide N-acetyltransferase (HGSNAT) from Homo sapiens (Human).